A 132-amino-acid polypeptide reads, in one-letter code: Large ribosomal subunit protein uL22 (132 aa).

This sequence belongs to the universal ribosomal protein uL22 family. As to quaternary structure, part of the 50S ribosomal subunit.

In terms of biological role, this protein binds specifically to 23S rRNA; its binding is stimulated by other ribosomal proteins, e.g. L4, L17, and L20. It is important during the early stages of 50S assembly. It makes multiple contacts with different domains of the 23S rRNA in the assembled 50S subunit and ribosome. The globular domain of the protein is located near the polypeptide exit tunnel on the outside of the subunit, while an extended beta-hairpin is found that lines the wall of the exit tunnel in the center of the 70S ribosome. The protein is Large ribosomal subunit protein uL22 of Pelagibacter ubique (strain HTCC1062).